A 213-amino-acid polypeptide reads, in one-letter code: High frequency lysogenization protein HflD homolog (213 aa).

Positions 79–126 (QGLNAELTRYTLSLMVLERKLSSAKGALDTLGNRINGLQRQLEHFDLQ) form a coiled coil.

Belongs to the HflD family.

Its subcellular location is the cytoplasm. The protein localises to the cell inner membrane. In Shigella boydii serotype 18 (strain CDC 3083-94 / BS512), this protein is High frequency lysogenization protein HflD homolog.